The chain runs to 900 residues: Sterol regulatory element-binding protein 1 (900 aa).

Low complexity predominate over residues 1–16 (MQSSIPSVSVSVASPA). Disordered stretches follow at residues 1–49 (MQSS…TKAS) and 206–263 (TTCK…PKKT). A nuclear form of sre1; complements deletions of sre1 or scp1 region spans residues 1 to 440 (MQSSIPSVSV…FALPPFLMSP (440 aa)). Topologically, residues 1–442 (MQSSIPSVSV…LPPFLMSPFT (442 aa)) are cytoplasmic. A compositionally biased stretch (polar residues) spans 21 to 32 (TKASPDSKSPNS). Over residues 35–49 (AIPSSSPLASSTKAS) the composition is skewed to low complexity. Residues 260 to 332 (PKKTAHNMIE…AKATEYIRHL (73 aa)) enclose the bHLH domain. The chain crosses the membrane as a helical span at residues 443–463 (GTVLFNMLKIGVVLLGLFYLL). At 464–509 (HDNSLFKGFKGEKKSKVSTRSSMSPSSILFRKTVFEKYCLLDHSTS) the chain is on the lumenal side. A helical membrane pass occupies residues 510-530 (TISLFFGLLIFTLKSAYGYLT). Residues 531–900 (HRLSALYTSS…QEDLGYVSSA (370 aa)) lie on the Cytoplasmic side of the membrane. Ser898 and Ser899 each carry phosphoserine.

As to quaternary structure, forms a tight complex with scp1, composed of 4 copies of scp1 and 4 copies of sre1, which protects sre1 precursor from degradation by the proteasome. Post-translationally, in low oxygen or sterol conditions, undergoes proteolytic cleavage by rhomboid-type protease rbd2 and is released as soluble transcription factor from the membrane. In terms of processing, processed form is phosphorylated.

Its subcellular location is the endoplasmic reticulum membrane. It is found in the nucleus. Functionally, precursor of the transcription factor form (Processed sterol regulatory element-binding protein 1), which is embedded in the endoplasmic reticulum membrane. Low oxygen or sterol conditions promote processing of this form, releasing the transcription factor form that translocates into the nucleus and activates transcription of genes required for adaptation to anaerobic growth. Its function is as follows. Transcriptional activator required for transcription of genes required for adaptation to anaerobic growth like those implicated in the nonrespiratory oxygen-consumptive biosynthetic pathways of sterol, heme, sphingolipid, and ubiquinone biosynthesis. May monitor oxygen levels through sterol synthesis steps which require oxygen. This Schizosaccharomyces pombe (strain 972 / ATCC 24843) (Fission yeast) protein is Sterol regulatory element-binding protein 1.